Consider the following 147-residue polypeptide: MVHFTAEEKAAITSIWDKVDLEKVGGETLGRLLIVYPWTQRFFDKFGNLSSALAIMGNPRIRAHGKKVLTSLGLGVKNMDNLKETFAHLSELHCDKLHVDPENFKLLGNMLVIVLSTHFAKEFTPEVQAAWQKLVIGVANALSHKYH.

Positions 3 to 147 constitute a Globin domain; the sequence is HFTAEEKAAI…VANALSHKYH (145 aa). Residues histidine 64 and histidine 93 each coordinate heme b.

Belongs to the globin family. In terms of assembly, heterotetramer of two alpha chains and two beta chains. As to expression, red blood cells.

Its function is as follows. This is an embryonic beta-type chain. The sequence is that of Hemoglobin subunit beta-H1 (Hbb-bh1) from Mus musculus (Mouse).